Here is a 479-residue protein sequence, read N- to C-terminus: F-box/LRR-repeat protein 16 (479 aa).

The tract at residues methionine 1–arginine 92 is disordered. Residues cysteine 47–leucine 60 show a composition bias toward pro residues. Arginine 92 carries the post-translational modification Omega-N-methylarginine. Residues proline 94–proline 139 form the F-box domain. LRR repeat units follow at residues asparagine 321 to alanine 342, lysine 347 to cysteine 369, arginine 373 to serine 394, serine 398 to leucine 419, asparagine 423 to valine 444, and leucine 446 to glutamine 470.

In terms of assembly, interacts with SKP1 and CUL1.

Its function is as follows. Substrate-recognition component of the SCF (SKP1-CUL1-F-box protein)-type E3 ubiquitin ligase complex. This chain is F-box/LRR-repeat protein 16 (Fbxl16), found in Mus musculus (Mouse).